The following is a 591-amino-acid chain: Probable metalloprotease ARX1 (591 aa).

This sequence belongs to the peptidase M24 family. In terms of assembly, component of the nucleoplasmic and cytoplasmic pre-60S ribosomal particles.

The protein localises to the cytoplasm. The protein resides in the nucleus. In terms of biological role, probable metalloprotease involved in proper assembly of pre-ribosomal particles during the biogenesis of the 60S ribosomal subunit. Accompanies the pre-60S particles to the cytoplasm. In Eremothecium gossypii (strain ATCC 10895 / CBS 109.51 / FGSC 9923 / NRRL Y-1056) (Yeast), this protein is Probable metalloprotease ARX1 (ARX1).